A 322-amino-acid chain; its full sequence is Undecaprenyl-phosphate 4-deoxy-4-formamido-L-arabinose transferase (322 aa).

The Cytoplasmic portion of the chain corresponds to Met1–Met235. A helical membrane pass occupies residues Leu236–Ile256. The Periplasmic portion of the chain corresponds to Leu257–Gly269. Residues Val270–Leu290 traverse the membrane as a helical segment. The Cytoplasmic segment spans residues Leu291–Glu322.

It belongs to the glycosyltransferase 2 family.

Its subcellular location is the cell inner membrane. It catalyses the reaction UDP-4-deoxy-4-formamido-beta-L-arabinose + di-trans,octa-cis-undecaprenyl phosphate = 4-deoxy-4-formamido-alpha-L-arabinopyranosyl di-trans,octa-cis-undecaprenyl phosphate + UDP. It participates in glycolipid biosynthesis; 4-amino-4-deoxy-alpha-L-arabinose undecaprenyl phosphate biosynthesis; 4-amino-4-deoxy-alpha-L-arabinose undecaprenyl phosphate from UDP-4-deoxy-4-formamido-beta-L-arabinose and undecaprenyl phosphate: step 1/2. It functions in the pathway bacterial outer membrane biogenesis; lipopolysaccharide biosynthesis. Catalyzes the transfer of 4-deoxy-4-formamido-L-arabinose from UDP to undecaprenyl phosphate. The modified arabinose is attached to lipid A and is required for resistance to polymyxin and cationic antimicrobial peptides. The polypeptide is Undecaprenyl-phosphate 4-deoxy-4-formamido-L-arabinose transferase (Escherichia coli (strain SMS-3-5 / SECEC)).